The sequence spans 239 residues: Ureidoacrylate amidohydrolase RutB (239 aa).

Catalysis depends on Asp35, which acts as the Proton acceptor. Lys144 is an active-site residue. Cys177 serves as the catalytic Nucleophile.

Belongs to the isochorismatase family. RutB subfamily.

It carries out the reaction (Z)-3-ureidoacrylate + H2O + H(+) = (Z)-3-aminoacrylate + NH4(+) + CO2. It catalyses the reaction (Z)-3-ureidoacrylate + H2O = (Z)-3-aminoacrylate + carbamate + H(+). The enzyme catalyses (Z)-2-methylureidoacrylate + H2O + H(+) = (Z)-2-methylaminoacrylate + NH4(+) + CO2. Functionally, hydrolyzes ureidoacrylate to form aminoacrylate and carbamate. The carbamate hydrolyzes spontaneously, thereby releasing one of the nitrogen atoms of the pyrimidine ring as ammonia and one of its carbon atoms as CO2. This Caulobacter segnis (strain ATCC 21756 / DSM 7131 / JCM 7823 / NBRC 15250 / LMG 17158 / TK0059) (Mycoplana segnis) protein is Ureidoacrylate amidohydrolase RutB.